The sequence spans 239 residues: tRNA (guanine-N(7)-)-methyltransferase (239 aa).

Positions 69, 94, 121, and 144 each coordinate S-adenosyl-L-methionine. D144 is an active-site residue. K148 serves as a coordination point for substrate. Residues R150–R155 form an interaction with RNA region. Residues D180 and T217 to E220 each bind substrate.

This sequence belongs to the class I-like SAM-binding methyltransferase superfamily. TrmB family. In terms of assembly, monomer.

The catalysed reaction is guanosine(46) in tRNA + S-adenosyl-L-methionine = N(7)-methylguanosine(46) in tRNA + S-adenosyl-L-homocysteine. It participates in tRNA modification; N(7)-methylguanine-tRNA biosynthesis. Catalyzes the formation of N(7)-methylguanine at position 46 (m7G46) in tRNA. The protein is tRNA (guanine-N(7)-)-methyltransferase of Yersinia pseudotuberculosis serotype I (strain IP32953).